The chain runs to 262 residues: Ribosomal RNA small subunit methyltransferase A (262 aa).

S-adenosyl-L-methionine-binding residues include His-16, Leu-18, Gly-43, Glu-64, Asp-89, and Asn-109.

This sequence belongs to the class I-like SAM-binding methyltransferase superfamily. rRNA adenine N(6)-methyltransferase family. RsmA subfamily.

It is found in the cytoplasm. It carries out the reaction adenosine(1518)/adenosine(1519) in 16S rRNA + 4 S-adenosyl-L-methionine = N(6)-dimethyladenosine(1518)/N(6)-dimethyladenosine(1519) in 16S rRNA + 4 S-adenosyl-L-homocysteine + 4 H(+). Specifically dimethylates two adjacent adenosines (A1518 and A1519) in the loop of a conserved hairpin near the 3'-end of 16S rRNA in the 30S particle. May play a critical role in biogenesis of 30S subunits. This is Ribosomal RNA small subunit methyltransferase A from Xanthomonas oryzae pv. oryzae (strain MAFF 311018).